Here is a 206-residue protein sequence, read N- to C-terminus: MKLIVGLGNPGTEYAKTRHNIGFMVIDRLADESRVSTEKNQHKAQICQITIGSEKVILAKPQTYMNLSGQSVVALMNWYKLSPDELFVITDDMDLPPGVLRIRKNGSAGGQRGLKNIIELLGTQQFPRMRVGIGRPEHGAVDHVLGKISEAEAELINPAIQTAVEAVKVWVLEGTQAAMNKFNQKNKKKKEKEQPEAATDQLLENK.

Tyrosine 14 contacts tRNA. The Proton acceptor role is filled by histidine 19. TRNA contacts are provided by tyrosine 64 and asparagine 66. The disordered stretch occupies residues 182–206 (FNQKNKKKKEKEQPEAATDQLLENK).

Belongs to the PTH family. Monomer.

Its subcellular location is the cytoplasm. It catalyses the reaction an N-acyl-L-alpha-aminoacyl-tRNA + H2O = an N-acyl-L-amino acid + a tRNA + H(+). Hydrolyzes ribosome-free peptidyl-tRNAs (with 1 or more amino acids incorporated), which drop off the ribosome during protein synthesis, or as a result of ribosome stalling. Its function is as follows. Catalyzes the release of premature peptidyl moieties from peptidyl-tRNA molecules trapped in stalled 50S ribosomal subunits, and thus maintains levels of free tRNAs and 50S ribosomes. The protein is Peptidyl-tRNA hydrolase of Desulforamulus reducens (strain ATCC BAA-1160 / DSM 100696 / MI-1) (Desulfotomaculum reducens).